Here is a 741-residue protein sequence, read N- to C-terminus: Transketolase-1, chloroplastic (741 aa).

A chloroplast-targeting transit peptide spans methionine 1 to alanine 66. The tract at residues glycine 22–alanine 51 is disordered. At alanine 67 the chain carries N-acetylalanine. Position 103 (histidine 103) interacts with substrate. Thiamine diphosphate-binding positions include histidine 143 and glycine 192–leucine 194. Residue aspartate 233 participates in Mg(2+) binding. Glycine 234 and asparagine 263 together coordinate thiamine diphosphate. Asparagine 263 and isoleucine 265 together coordinate Mg(2+). Substrate is bound at residue histidine 340. Histidine 340 contributes to the thiamine diphosphate binding site. Serine 428 carries the phosphoserine modification. Substrate-binding residues include arginine 434 and serine 461. Glutamate 488 and phenylalanine 515 together coordinate thiamine diphosphate. The active-site Proton donor is the glutamate 488. Residues histidine 539, aspartate 547, and arginine 598 each coordinate substrate.

This sequence belongs to the transketolase family. Homodimer. Requires Mg(2+) as cofactor. Ca(2+) serves as cofactor. The cofactor is Mn(2+). Co(2+) is required as a cofactor. It depends on thiamine diphosphate as a cofactor.

Its subcellular location is the plastid. It is found in the chloroplast stroma. It carries out the reaction D-sedoheptulose 7-phosphate + D-glyceraldehyde 3-phosphate = aldehydo-D-ribose 5-phosphate + D-xylulose 5-phosphate. It functions in the pathway carbohydrate biosynthesis; Calvin cycle. Functionally, catalyzes the reversible transfer of a two-carbon ketol group from fructose-6-phosphate or sedoheptulose-7-phosphate to glyceraldehyde-3-phosphate to yield xylulose-5-phosphate and erythrose-4-phosphate or ribose-5-phosphate, respectively. Could act as a stress sensor involved in adaptation process. This is Transketolase-1, chloroplastic (TKL-1) from Arabidopsis thaliana (Mouse-ear cress).